Consider the following 348-residue polypeptide: MVSSPMSWSKRLDHLLNGGVFSHAEATELMEAWLAEALTPVQTGAFLAALRSRGVDGTELGAMAAVLRQASPLPCERPTLGLVDTCGTGGDGADTFNISTAVAFTAAACGATVAKHGNRSASGKVGSADVLEGLGLHLKAPAAQVVSALPATRVTFLFAPAWHPALVNLAPLRKSLGVRTVFNLLGPLVNPLRPDGQVLGVATDDLLDPMAEALRSLGQDRAVVVHGSGGLDEASLAGPNPVRILEKGQVRSEWIAPEDLGLQQAPLDALRGGDLVRNQTILEELLSGRGSQAQNEVVAFNTALVLWVAGVESDFKQGAQKALAALSQGSPWSRLEQLRAALSPAKEE.

5-phospho-alpha-D-ribose 1-diphosphate contacts are provided by residues Gly-87, 90–91 (GD), Thr-95, 97–100 (NIST), 115–123 (KHGNRSASG), and Ser-127. Position 87 (Gly-87) interacts with anthranilate. A Mg(2+)-binding site is contributed by Ser-99. Asn-118 lines the anthranilate pocket. Residue Arg-173 participates in anthranilate binding. Positions 232 and 233 each coordinate Mg(2+).

This sequence belongs to the anthranilate phosphoribosyltransferase family. In terms of assembly, homodimer. Mg(2+) is required as a cofactor.

The catalysed reaction is N-(5-phospho-beta-D-ribosyl)anthranilate + diphosphate = 5-phospho-alpha-D-ribose 1-diphosphate + anthranilate. The protein operates within amino-acid biosynthesis; L-tryptophan biosynthesis; L-tryptophan from chorismate: step 2/5. Catalyzes the transfer of the phosphoribosyl group of 5-phosphorylribose-1-pyrophosphate (PRPP) to anthranilate to yield N-(5'-phosphoribosyl)-anthranilate (PRA). In Synechococcus sp. (strain WH7803), this protein is Anthranilate phosphoribosyltransferase.